A 221-amino-acid chain; its full sequence is 7-cyano-7-deazaguanine synthase (221 aa).

8 to 18 (LSGGMDSAAVI) is an ATP binding site. 4 residues coordinate Zn(2+): C186, C196, C199, and C202.

The protein belongs to the QueC family. It depends on Zn(2+) as a cofactor.

The catalysed reaction is 7-carboxy-7-deazaguanine + NH4(+) + ATP = 7-cyano-7-deazaguanine + ADP + phosphate + H2O + H(+). Its pathway is purine metabolism; 7-cyano-7-deazaguanine biosynthesis. In terms of biological role, catalyzes the ATP-dependent conversion of 7-carboxy-7-deazaguanine (CDG) to 7-cyano-7-deazaguanine (preQ(0)). The polypeptide is 7-cyano-7-deazaguanine synthase (Stenotrophomonas maltophilia (strain K279a)).